We begin with the raw amino-acid sequence, 466 residues long: Ornithine decarboxylase (466 aa).

At Lys116 the chain carries N6-(pyridoxal phosphate)lysine. Residues Ser247, Gly286, and 318–321 (EPGR) contribute to the pyridoxal 5'-phosphate site. 362–363 (FD) provides a ligand contact to substrate. The Proton donor; shared with dimeric partner role is filled by Cys411. Asp412 contributes to the substrate binding site. Tyr441 is a pyridoxal 5'-phosphate binding site.

This sequence belongs to the Orn/Lys/Arg decarboxylase class-II family. In terms of assembly, homodimer. Only the dimer is catalytically active, as the active sites are constructed of residues from both monomers. It depends on pyridoxal 5'-phosphate as a cofactor.

It localises to the cytoplasm. It catalyses the reaction L-ornithine + H(+) = putrescine + CO2. The protein operates within amine and polyamine biosynthesis; putrescine biosynthesis via L-ornithine pathway; putrescine from L-ornithine: step 1/1. Inhibited by antizyme (AZ) OAZ1 in response to polyamine levels. AZ inhibits the assembly of the functional homodimer by binding to ODC monomers and targeting them for ubiquitin-independent proteolytic destruction by the 26S proteasome. Its function is as follows. Catalyzes the first and rate-limiting step of polyamine biosynthesis that converts ornithine into putrescine, which is the precursor for the polyamines, spermidine and spermine. Polyamines are essential for cell proliferation and are implicated in cellular processes, ranging from DNA replication to apoptosis. The sequence is that of Ornithine decarboxylase from Saccharomyces cerevisiae (strain ATCC 204508 / S288c) (Baker's yeast).